A 227-amino-acid polypeptide reads, in one-letter code: Cytochrome c oxidase subunit 2 (227 aa).

At Met-1–Ser-14 the chain is on the mitochondrial intermembrane side. A helical transmembrane segment spans residues Pro-15–Met-45. Topologically, residues Leu-46–Gln-59 are mitochondrial matrix. Residues Glu-60–Met-87 form a helical membrane-spanning segment. Residues Asp-88–Ile-227 are Mitochondrial intermembrane-facing. Residues His-161, Cys-196, Glu-198, Cys-200, His-204, and Met-207 each contribute to the Cu cation site. Glu-198 serves as a coordination point for Mg(2+).

It belongs to the cytochrome c oxidase subunit 2 family. In terms of assembly, component of the cytochrome c oxidase (complex IV, CIV), a multisubunit enzyme composed of 14 subunits. The complex is composed of a catalytic core of 3 subunits MT-CO1, MT-CO2 and MT-CO3, encoded in the mitochondrial DNA, and 11 supernumerary subunits COX4I, COX5A, COX5B, COX6A, COX6B, COX6C, COX7A, COX7B, COX7C, COX8 and NDUFA4, which are encoded in the nuclear genome. The complex exists as a monomer or a dimer and forms supercomplexes (SCs) in the inner mitochondrial membrane with NADH-ubiquinone oxidoreductase (complex I, CI) and ubiquinol-cytochrome c oxidoreductase (cytochrome b-c1 complex, complex III, CIII), resulting in different assemblies (supercomplex SCI(1)III(2)IV(1) and megacomplex MCI(2)III(2)IV(2)). Found in a complex with TMEM177, COA6, COX18, COX20, SCO1 and SCO2. Interacts with TMEM177 in a COX20-dependent manner. Interacts with COX20. Interacts with COX16. Cu cation serves as cofactor.

The protein resides in the mitochondrion inner membrane. It carries out the reaction 4 Fe(II)-[cytochrome c] + O2 + 8 H(+)(in) = 4 Fe(III)-[cytochrome c] + 2 H2O + 4 H(+)(out). In terms of biological role, component of the cytochrome c oxidase, the last enzyme in the mitochondrial electron transport chain which drives oxidative phosphorylation. The respiratory chain contains 3 multisubunit complexes succinate dehydrogenase (complex II, CII), ubiquinol-cytochrome c oxidoreductase (cytochrome b-c1 complex, complex III, CIII) and cytochrome c oxidase (complex IV, CIV), that cooperate to transfer electrons derived from NADH and succinate to molecular oxygen, creating an electrochemical gradient over the inner membrane that drives transmembrane transport and the ATP synthase. Cytochrome c oxidase is the component of the respiratory chain that catalyzes the reduction of oxygen to water. Electrons originating from reduced cytochrome c in the intermembrane space (IMS) are transferred via the dinuclear copper A center (CU(A)) of subunit 2 and heme A of subunit 1 to the active site in subunit 1, a binuclear center (BNC) formed by heme A3 and copper B (CU(B)). The BNC reduces molecular oxygen to 2 water molecules using 4 electrons from cytochrome c in the IMS and 4 protons from the mitochondrial matrix. The chain is Cytochrome c oxidase subunit 2 (MT-CO2) from Malacothrix typica (Long-eared mouse).